The chain runs to 1311 residues: Zinc finger protein 423 (1311 aa).

Over residues 1–11 the composition is skewed to basic residues; sequence MSRRKQAKPRS. Disordered stretches follow at residues 1–21, 34–70, and 95–123; these read MSRR…EASD, GGLE…EDVE, and AHRC…VASP. The segment covering 41 to 54 has biased composition (basic and acidic residues); sequence ECDRKSSRALEDRN. Phosphoserine is present on residues Ser-55 and Ser-58. The C2H2-type 1; degenerate zinc finger occupies 75-101; that stretch reads YTCDHCQQDFESLADLTDHRAHRCPGD. Residues 110–123 are compositionally biased toward polar residues; it reads WVASSPSSKDVASP. 7 C2H2-type zinc fingers span residues 146-168, 174-196, 202-224, 230-252, 271-294, 303-326, and 331-353; these read YPCQ…EQIH, FKCT…IKLH, YHCH…LKTH, FKCS…MQAH, FMCD…LTLH, LQCI…HQAH, and HKCP…LDSH. A disordered region spans residues 354 to 426; the sequence is RQPDSSNHSV…PLRGQKKMRD (73 aa). Positions 373–382 are enriched in polar residues; the sequence is ASMSSATPDS. Residues 390–404 are compositionally biased toward low complexity; sequence SVASMSSATPDSSAS. A C2H2-type 9; degenerate zinc finger spans residues 436 to 460; the sequence is YSCPYCSKRDFTSLAVLEIHLKTIH. 3 consecutive C2H2-type zinc fingers follow at residues 468–491, 507–530, and 544–567; these read HTCQ…RKLH, FHCN…RVSH, and FFCN…QQAH. The C2H2-type 13; atypical zinc finger occupies 590–615; the sequence is YSCPYCTNSPIFGSILKLTKHIKENH. The interval 617-654 is disordered; that stretch reads NIPLAHSKKSKAEQSPVSSDVEVSSPKRQRLSGSANSI. At Ser-631 the chain carries Phosphoserine. Residues 631–642 show a composition bias toward low complexity; that stretch reads SPVSSDVEVSSP. 7 consecutive C2H2-type zinc fingers follow at residues 659–681, 689–711, 719–742, 747–770, 777–800, 808–830, and 834–857; these read YPCN…LKLH, QACP…LTVH, YVCE…LDMH, YHCT…AVKH, YRCT…KHSH, HKCI…ITTH, and YNCR…REKH. The segment at 913–935 adopts a C2H2-type 21; degenerate zinc-finger fold; the sequence is YGCDICGAAYTMEVLLQNHRLRD. C2H2-type zinc fingers lie at residues 957-979, 986-1008, and 1047-1069; these read HKCN…LQTH, YMCP…KVTH, and FRCV…GTFH. Ser-1081 is subject to Phosphoserine. The C2H2-type 25; degenerate zinc finger occupies 1091–1109; sequence YKCALCLKEFRSKQDLVRL. 5 consecutive C2H2-type zinc fingers follow at residues 1147 to 1170, 1195 to 1217, 1225 to 1247, 1256 to 1279, and 1286 to 1309; these read LRCP…QVDH, YQCI…VANH, HECK…LIEH, FKCP…FAVH, and YDCS…MSQH. Over residues 1163–1174 the composition is skewed to basic and acidic residues; it reads ESHMQVDHRDLT. The interval 1163-1190 is disordered; that stretch reads ESHMQVDHRDLTPETSGPRKGAQTSPVP.

Belongs to the krueppel C2H2-type zinc-finger protein family. In terms of assembly, homodimer. Interacts with PARP1, SMAD1 and SMAD4. Interacts with EBF1. Interacts with CEP290. Expressed in brain, eye, olfactory epithelium, spleen and heart. Expressed in the basal layer, consisting of neural precursor cells and immature sensory neurons of the olfactory epithelium, but not in the mature receptor cells.

The protein localises to the nucleus. Functionally, transcription factor that can both act as an activator or a repressor depending on the context. Plays a central role in BMP signaling and olfactory neurogenesis. Associates with SMADs in response to BMP2 leading to activate transcription of BMP target genes. Acts as a transcriptional repressor via its interaction with EBF1, a transcription factor involved in terminal olfactory receptor neurons differentiation; this interaction preventing EBF1 to bind DNA and activate olfactory-specific genes. Involved in olfactory neurogenesis by participating in a developmental switch that regulates the transition from differentiation to maturation in olfactory receptor neurons. Controls proliferation and differentiation of neural precursors in cerebellar vermis formation. The protein is Zinc finger protein 423 (Znf423) of Rattus norvegicus (Rat).